A 469-amino-acid chain; its full sequence is Glutamate--tRNA ligase 2 (469 aa).

The 'HIGH' region motif lies at 8-18; the sequence is PSPTGFLHVGG. The 'KMSKS' region motif lies at 250–254; that stretch reads KLSKR. Lys-253 contributes to the ATP binding site.

Belongs to the class-I aminoacyl-tRNA synthetase family. Glutamate--tRNA ligase type 1 subfamily. In terms of assembly, monomer.

The protein resides in the cytoplasm. The enzyme catalyses tRNA(Glu) + L-glutamate + ATP = L-glutamyl-tRNA(Glu) + AMP + diphosphate. Catalyzes the attachment of glutamate to tRNA(Glu) in a two-step reaction: glutamate is first activated by ATP to form Glu-AMP and then transferred to the acceptor end of tRNA(Glu). This chain is Glutamate--tRNA ligase 2, found in Thermotoga petrophila (strain ATCC BAA-488 / DSM 13995 / JCM 10881 / RKU-1).